Here is a 240-residue protein sequence, read N- to C-terminus: Allene oxide cyclase, chloroplastic (240 aa).

A chloroplast-targeting transit peptide spans 1 to 49 (MAAAAPSRVSVRAAAPGQTGGFAKIRPQVVVAAAARSAGVSGRRARSVR).

It belongs to the allene oxide cyclase family.

The protein localises to the plastid. The protein resides in the chloroplast. The enzyme catalyses (9Z,13S,15Z)-12,13-epoxyoctadeca-9,11,15-trienoate = (9S,13S,15Z)-12-oxophyto-10,15-dienoate. Its pathway is lipid metabolism; polyunsaturated fatty acid biosynthesis. Functionally, involved in the production of 12-oxo-phytodienoic acid (OPDA), a precursor of jasmonic acid (JA). Required for the production of JA in response to wounding. Necessary for flower and coleoptile development regulation by light, including blue (BL), red (RL) and far red (FR) lights. Involved in the auxin-mediated signaling pathway leading to growth stimulation. Essential for photodestruction of phyA upon activation by RL and FR. Implicated in responses to salt stress (NaCl). Its function is as follows. Confers resistance to incompatible strains of the blast fungus Magnaporthe grisea, jasmonic acid (JA) thus playing a significant role in the resistance to fungal infection. Implicated in riboflavin-induced resistance to the sheath blight Rhizoctonia solani. Required for Pseudomonas fluorescens-mediated JA-dependent induced systemic resistance (ISR). Confers some resistance, independently of the JA pathway but probably via OPDA accumulation, to brown planthopper (BPH, Nilaparvata lugens), a destructive, monophagous, piercing-sucking insect, mainly by reducing its feeding activity and survival rate. Triggers resistance to the chewing insect striped stem borer (SSB) Chilo suppressalis, to the root hemiparasite witchweed Striga hermonthica, and to the root feeder insect rice water weevil Lissorhoptrus oryzophilus, in a JA-dependent manner, by attenuating both the growth mass and growth rate of caterpillars. The sequence is that of Allene oxide cyclase, chloroplastic from Oryza sativa subsp. indica (Rice).